Here is a 457-residue protein sequence, read N- to C-terminus: Ribulose bisphosphate carboxylase-like protein (457 aa).

Mg(2+)-binding residues include Lys199, Asp201, and Glu202. The residue at position 199 (Lys199) is an N6-carboxylysine. Positions 426-457 (AIAAFGKPAHGQAASPQPSEQASEPDAAGGDS) are disordered.

It belongs to the RuBisCO large chain family. Type IV subfamily. Mg(2+) serves as cofactor.

May be involved in sulfur metabolism and oxidative stress response. Does not show RuBisCO activity. The protein is Ribulose bisphosphate carboxylase-like protein of Allochromatium vinosum (strain ATCC 17899 / DSM 180 / NBRC 103801 / NCIMB 10441 / D) (Chromatium vinosum).